A 521-amino-acid chain; its full sequence is Ribonuclease Y (521 aa).

Residues 5 to 25 form a helical membrane-spanning segment; sequence MMTMILAVIAAAIGFLIGNLL. Residues 211 to 271 enclose the KH domain; that stretch reads TVSVVALPSD…VRREVAKLSL (61 aa). One can recognise an HD domain in the interval 337 to 430; it reads VYQHSLEVAF…VQAADALSGA (94 aa).

The protein belongs to the RNase Y family.

The protein resides in the cell membrane. Functionally, endoribonuclease that initiates mRNA decay. The protein is Ribonuclease Y of Geotalea uraniireducens (strain Rf4) (Geobacter uraniireducens).